The chain runs to 122 residues: Histone H2B, gonadal (122 aa).

Positions 1 to 31 are disordered; that stretch reads MPPKPSGKGQKKAGKAKGAPRTDKKRRRKRK. The residue at position 2 (P2) is a N,N-dimethylproline. O-linked (GlcNAc) serine glycosylation is present at S109. K117 participates in a covalent cross-link: Glycyl lysine isopeptide (Lys-Gly) (interchain with G-Cter in ubiquitin).

It belongs to the histone H2B family. The nucleosome is a histone octamer containing two molecules each of H2A, H2B, H3 and H4 assembled in one H3-H4 heterotetramer and two H2A-H2B heterodimers. The octamer wraps approximately 147 bp of DNA. In terms of processing, monoubiquitination of Lys-117 gives a specific tag for epigenetic transcriptional activation and is also prerequisite for histone H3 'Lys-4' and 'Lys-79' methylation. GlcNAcylation at Ser-109 promotes monoubiquitination of Lys-117. It fluctuates in response to extracellular glucose, and associates with transcribed genes.

It localises to the nucleus. The protein localises to the chromosome. Core component of nucleosome. Nucleosomes wrap and compact DNA into chromatin, limiting DNA accessibility to the cellular machineries which require DNA as a template. Histones thereby play a central role in transcription regulation, DNA repair, DNA replication and chromosomal stability. DNA accessibility is regulated via a complex set of post-translational modifications of histones, also called histone code, and nucleosome remodeling. In Asterias rubens (Common European starfish), this protein is Histone H2B, gonadal.